The sequence spans 622 residues: Apical membrane antigen 1 (622 aa).

Residues 1–24 (MRKLYCVLLLSAFEFTYMINFGRG) form the signal peptide. The Extracellular portion of the chain corresponds to 25–546 (QNYWEHPYQK…EHKPTYDKMK (522 aa)). Cystine bridges form between cysteine 149–cysteine 302, cysteine 217–cysteine 247, cysteine 263–cysteine 275, cysteine 320–cysteine 418, and cysteine 337–cysteine 409. N-linked (GlcNAc...) asparagine glycosylation is present at asparagine 162. N-linked (GlcNAc...) asparagine glycans are attached at residues asparagine 286, asparagine 371, asparagine 421, asparagine 422, and asparagine 499. 3 disulfides stabilise this stretch: cysteine 443–cysteine 502, cysteine 490–cysteine 507, and cysteine 492–cysteine 509. A helical transmembrane segment spans residues 547–567 (IIIASSAAVAVLATILMVYLY). Residues 568 to 622 (KRKGNAEKYDKMDEPQHYGKSNSRNDEMLDPEASFWGEEKRASHTTPVLMEKPYY) are Cytoplasmic-facing. Residues 578-594 (KMDEPQHYGKSNSRNDE) show a composition bias toward basic and acidic residues. Residues 578 to 607 (KMDEPQHYGKSNSRNDEMLDPEASFWGEEK) form a disordered region.

This sequence belongs to the apicomplexan parasites AMA1 family.

It is found in the membrane. Its function is as follows. Involved in parasite invasion of erythrocytes. The polypeptide is Apical membrane antigen 1 (AMA-1) (Plasmodium falciparum (isolate FC27 / Papua New Guinea)).